We begin with the raw amino-acid sequence, 82 residues long: Antitoxin MazE2 (82 aa).

Probably forms a complex with cognate toxin MazF2.

Functionally, antitoxin component of a type II toxin-antitoxin (TA) system. Labile antitoxin that binds to cognate MazF2 toxin and counteracts its endoribonuclease activity. The polypeptide is Antitoxin MazE2 (mazE2) (Mycobacterium bovis (strain ATCC BAA-935 / AF2122/97)).